The chain runs to 213 residues: Nicolin-1 (213 aa).

As to quaternary structure, part of the neuronal tubulin polyglutamylase complex which contains TPGS1, TPGS2, TTLL1, LRRC49 and NICN1. High expression level is found in brain, testis, liver and kidney. Weak expression in spleen, leukocytes, small intestine and colon.

It localises to the nucleus. In Homo sapiens (Human), this protein is Nicolin-1 (NICN1).